We begin with the raw amino-acid sequence, 261 residues long: Enolase-phosphatase E1 (261 aa).

Residues Asp-16 and Glu-18 each coordinate Mg(2+). Substrate contacts are provided by residues 153 to 154 (SS) and Lys-187. Asp-212 is a binding site for Mg(2+).

Belongs to the HAD-like hydrolase superfamily. MasA/MtnC family. In terms of assembly, monomer. Mg(2+) is required as a cofactor.

It is found in the cytoplasm. Its subcellular location is the nucleus. It catalyses the reaction 5-methylsulfanyl-2,3-dioxopentyl phosphate + H2O = 1,2-dihydroxy-5-(methylsulfanyl)pent-1-en-3-one + phosphate. Its pathway is amino-acid biosynthesis; L-methionine biosynthesis via salvage pathway; L-methionine from S-methyl-5-thio-alpha-D-ribose 1-phosphate: step 3/6. It functions in the pathway amino-acid biosynthesis; L-methionine biosynthesis via salvage pathway; L-methionine from S-methyl-5-thio-alpha-D-ribose 1-phosphate: step 4/6. Functionally, bifunctional enzyme that catalyzes the enolization of 2,3-diketo-5-methylthiopentyl-1-phosphate (DK-MTP-1-P) into the intermediate 2-hydroxy-3-keto-5-methylthiopentenyl-1-phosphate (HK-MTPenyl-1-P), which is then dephosphorylated to form the acireductone 1,2-dihydroxy-3-keto-5-methylthiopentene (DHK-MTPene). The chain is Enolase-phosphatase E1 (enoph1) from Salmo salar (Atlantic salmon).